A 510-amino-acid chain; its full sequence is MDIRAAEISAILKEQIQNFGREAEVSEVGQVLSVGDGIARVYGLDNVQAGEMVEFENGTRGMALNLEIDNVGVVIFGSDRDIKEGQTVKRTGAIVDVPVGRGLLGRVVDALGNPIDGKGPIEATERRRVDVKAPGIIPRKSVHEPMQTGLKAIDALIPIGRGQRELIIGDRQTGKTAVALDAILNQKPLNVAGAPESQKLYCVYVAVGQKRSTVAQFVKVLEEQGALEYSIVVAATASDPAPMQFLAPFAGTAMGEYFRDNGMHALIIHDDLSKQAVAYRQMSLLLRRPPGREAYPGDVFYLHSRLLERAAKLNDENGAGSLTALPVIETQANDVSAYIPTNVISITDGQIFLESDLFYQGIRPAVNVGLSVSRVGSSAQIKAMKQVAGKIKGELAQYRELAAFAQFGSDLDASTQKLLNRGARLTELLKQSQFSPLKVEEQVVVIYAGTNGYLDNLPLNKVREFEAGFLLAMRTQHQDLLDTIRTSKELSKDSIANLTKALDAFAKSFA.

Position 169 to 176 (169 to 176 (GDRQTGKT)) interacts with ATP.

It belongs to the ATPase alpha/beta chains family. In terms of assembly, F-type ATPases have 2 components, CF(1) - the catalytic core - and CF(0) - the membrane proton channel. CF(1) has five subunits: alpha(3), beta(3), gamma(1), delta(1), epsilon(1). CF(0) has three main subunits: a(1), b(2) and c(9-12). The alpha and beta chains form an alternating ring which encloses part of the gamma chain. CF(1) is attached to CF(0) by a central stalk formed by the gamma and epsilon chains, while a peripheral stalk is formed by the delta and b chains.

It is found in the cell inner membrane. The catalysed reaction is ATP + H2O + 4 H(+)(in) = ADP + phosphate + 5 H(+)(out). Its function is as follows. Produces ATP from ADP in the presence of a proton gradient across the membrane. The alpha chain is a regulatory subunit. The polypeptide is ATP synthase subunit alpha (Azorhizobium caulinodans (strain ATCC 43989 / DSM 5975 / JCM 20966 / LMG 6465 / NBRC 14845 / NCIMB 13405 / ORS 571)).